A 241-amino-acid chain; its full sequence is Large ribosomal subunit protein uL3 (241 aa).

Disordered regions lie at residues 139–164 (VSHR…KMPG) and 215–241 (DAPK…QEGV). The residue at position 151 (Q151) is an N5-methylglutamine. A compositionally biased stretch (low complexity) spans 225–241 (ANGGEEAAAPAAEQEGV).

Belongs to the universal ribosomal protein uL3 family. As to quaternary structure, part of the 50S ribosomal subunit. Forms a cluster with proteins L14 and L19. Post-translationally, methylated by PrmB.

In terms of biological role, one of the primary rRNA binding proteins, it binds directly near the 3'-end of the 23S rRNA, where it nucleates assembly of the 50S subunit. This chain is Large ribosomal subunit protein uL3, found in Rhodopseudomonas palustris (strain HaA2).